Here is a 457-residue protein sequence, read N- to C-terminus: ATP-dependent protease ATPase subunit HslU (457 aa).

Residues valine 21, 63–68, aspartate 269, glutamate 335, and arginine 407 each bind ATP; that span reads GVGKTE.

The protein belongs to the ClpX chaperone family. HslU subfamily. In terms of assembly, a double ring-shaped homohexamer of HslV is capped on each side by a ring-shaped HslU homohexamer. The assembly of the HslU/HslV complex is dependent on binding of ATP.

It localises to the cytoplasm. In terms of biological role, ATPase subunit of a proteasome-like degradation complex; this subunit has chaperone activity. The binding of ATP and its subsequent hydrolysis by HslU are essential for unfolding of protein substrates subsequently hydrolyzed by HslV. HslU recognizes the N-terminal part of its protein substrates and unfolds these before they are guided to HslV for hydrolysis. This is ATP-dependent protease ATPase subunit HslU from Desulfotalea psychrophila (strain LSv54 / DSM 12343).